A 236-amino-acid polypeptide reads, in one-letter code: RNA-binding protein 24 (236 aa).

An RRM domain is found at 11–88; that stretch reads TKIFVGGLPY…RKANVNLAYL (78 aa). A necessary for interaction with EIF4E region spans residues 175–199; it reads QYPYAASPAAAGYVTAGGYGYAVQQ.

In terms of assembly, interacts with EIF4E; this interaction prevents EIF4E from binding to p53/TP53 mRNA and inhibits the assembly of translation initiation complex. (Microbial infection) Interacts with HCV mature core protein; this interaction, which enhances the interaction of Core with 5'-UTR may favor viral replication over translation. As to quaternary structure, (Microbial infection) Interacts with HCV Serine protease/helicase NS3. Expressed in fetal and adult heart and skeletal muscles.

It localises to the nucleus. The protein localises to the cytoplasm. Its function is as follows. Multifunctional RNA-binding protein involved in the regulation of pre-mRNA splicing, mRNA stability and mRNA translation important for cell fate decision and differentiation. Plays a major role in pre-mRNA alternative splicing regulation. Mediates preferentially muscle-specific exon inclusion in numerous mRNAs important for striated cardiac and skeletal muscle cell differentiation. Binds to intronic splicing enhancer (ISE) composed of stretches of GU-rich motifs localized in flanking intron of exon that will be included by alternative splicing. Involved in embryonic stem cell (ESC) transition to cardiac cell differentiation by promoting pre-mRNA alternative splicing events of several pluripotency and/or differentiation genes. Plays a role in the regulation of mRNA stability. Binds to 3'-untranslated region (UTR) AU-rich elements in target transcripts, such as CDKN1A and MYOG, leading to maintain their stabilities. Involved in myogenic differentiation by regulating MYOG levels. Binds to multiple regions in the mRNA 3'-UTR of TP63 isoform 2, hence inducing its destabilization. Also promotes the destabilization of the CHRM2 mRNA via its binding to a region in the coding sequence. Plays a role in the regulation of mRNA translation. Mediates repression of p53/TP53 mRNA translation through its binding to U-rich element in the 3'-UTR, hence preventing EIF4E from binding to p53/TP53 mRNA and translation initiation. Binds to a huge amount of mRNAs. Required for embryonic heart development, sarcomer and M-band formation in striated muscles. Together with RBM20, promotes the expression of short isoforms of PDLIM5/ENH in cardiomyocytes. (Microbial infection) Promotes hepatitis C virus (HCV) replication over translation through the inhibition of viral protein expression. Decreases viral translation by linking viral 5'- and 3'-UTRs, blocking 80S ribosome assembly on the viral IRES and enhancing the interaction of the mature core protein and 5'-UTR. The sequence is that of RNA-binding protein 24 from Homo sapiens (Human).